Here is a 253-residue protein sequence, read N- to C-terminus: MTRKIDAPWLIGWRAFVLLPVVHGSHAVIEDVNALAHRIENIHHRSQESREMQLNGDIFDGVQLTILLDGLEVGDKCLSLVPGVRGLLLHDRKKCGICTRTKPDRGLFTAYFGGLPEEDHIRSRHFQFFNDYGYLLRSMDLDAYTAPIIAPIVPGVVDCVVIYNKVHHIPIPALKPLLALNVQYEWNTVTQQLRIRTPKIRSNSYVSRDVTTRRKRYREDRDSGEDLGAESKRGNGSVRYTGRELRDSIMSRI.

The segment at 211-241 (TTRRKRYREDRDSGEDLGAESKRGNGSVRYT) is disordered.

This is an uncharacterized protein from Ictalurid herpesvirus 1 (strain Auburn) (IcHV-1).